Consider the following 131-residue polypeptide: MKIYSAVFIGGALGACLRYGLNLWIHTGQFPAATWLENAAGSLLLGILTGFFMIGAKRPLLSAFLGTGFCGGFTTMSTFSKETVMLLQGQPSLALLYVAASLISGIIFALIGVFVGRRIAGIQQRKGLQEK.

The next 4 helical transmembrane spans lie at 5 to 25, 35 to 55, 59 to 79, and 95 to 115; these read SAVF…NLWI, WLEN…FMIG, PLLS…MSTF, and LLYV…GVFV. Residues Gly-71 and Thr-74 each contribute to the Na(+) site.

Belongs to the fluoride channel Fluc/FEX (TC 1.A.43) family.

The protein localises to the cell membrane. It catalyses the reaction fluoride(in) = fluoride(out). Its activity is regulated as follows. Na(+) is not transported, but it plays an essential structural role and its presence is essential for fluoride channel function. In terms of biological role, fluoride-specific ion channel. Important for reducing fluoride concentration in the cell, thus reducing its toxicity. The protein is Fluoride-specific ion channel FluC 2 of Bacillus subtilis (strain 168).